A 1225-amino-acid chain; its full sequence is Cohesin subunit SA-3 (1225 aa).

A disordered region spans residues 1–97 (MSSPLQRAVG…HSRKQSEPPA (97 aa)). Residues 15 to 26 (ALSASSSSSASL) are compositionally biased toward low complexity. Residues 45–54 (LADEDTDFED) are compositionally biased toward acidic residues. Composition is skewed to basic residues over residues 59–69 (NVKKRAAKRPP) and 76–90 (KHPKKGSRVVHRHSR). An SCD domain is found at 309 to 394 (FVHRYRDVLP…SRFKDRMVSM (86 aa)). Disordered stretches follow at residues 546–567 (SEGHPPVGRVTGRKGLTSKERK), 1063–1113 (AETS…STAV), and 1177–1225 (EEDE…IEDF). Residues 1078-1089 (VEGPAKPNREDV) show a composition bias toward basic and acidic residues. Over residues 1090–1099 (SSSQEESLQL) the composition is skewed to low complexity. Over residues 1177 to 1191 (EEDEEEELEIQDESN) the composition is skewed to acidic residues. A compositionally biased stretch (polar residues) spans 1198 to 1209 (DMQASSYSSTSE). At Ser1203 the chain carries Phosphoserine. Acidic residues predominate over residues 1216–1225 (DSTELDIEDF).

Belongs to the SCC3 family. Component of the meiosis-specific cohesin complex, which also contains the SMC1 (SMC1A or SMC1B) and SMC3 heterodimer. Such complex likely contains RAD21, or the meiosis-specific related protein REC8. Interacts with CCDC79/TERB1; recruiting cohesin to telomeres to develop structural rigidity. In terms of processing, phosphorylated. As to expression, testis specific.

The protein localises to the nucleus. It localises to the chromosome. It is found in the centromere. In terms of biological role, meiosis specific component of cohesin complex. The cohesin complex is required for the cohesion of sister chromatids after DNA replication. The cohesin complex apparently forms a large proteinaceous ring within which sister chromatids can be trapped. At anaphase, the complex is cleaved and dissociates from chromatin, allowing sister chromatids to segregate. The meiosis-specific cohesin complex probably replaces mitosis specific cohesin complex when it dissociates from chromatin during prophase I. In Homo sapiens (Human), this protein is Cohesin subunit SA-3 (STAG3).